We begin with the raw amino-acid sequence, 287 residues long: ATP synthase gamma chain (287 aa).

It belongs to the ATPase gamma chain family. In terms of assembly, F-type ATPases have 2 components, CF(1) - the catalytic core - and CF(0) - the membrane proton channel. CF(1) has five subunits: alpha(3), beta(3), gamma(1), delta(1), epsilon(1). CF(0) has three main subunits: a, b and c.

Its subcellular location is the cell inner membrane. Its function is as follows. Produces ATP from ADP in the presence of a proton gradient across the membrane. The gamma chain is believed to be important in regulating ATPase activity and the flow of protons through the CF(0) complex. The chain is ATP synthase gamma chain from Xanthomonas oryzae pv. oryzae (strain MAFF 311018).